The chain runs to 104 residues: Large ribosomal subunit protein eL42 (104 aa).

The segment at 22–56 is disordered; it reads KVSQAKKSKDNPRAQGNRRYARKQRGYGGQTKPIL.

Belongs to the eukaryotic ribosomal protein eL42 family.

This Encephalitozoon cuniculi (strain GB-M1) (Microsporidian parasite) protein is Large ribosomal subunit protein eL42 (RPL44).